The following is a 325-amino-acid chain: Interferon regulatory factor 1 (325 aa).

The segment at residues 5 to 113 (RMRMRPWLEM…SAVRVYRMLP (109 aa)) is a DNA-binding region (IRF tryptophan pentad repeat). K78 bears the N6-acetyllysine mark. The tract at residues 92–165 (EEVKDQSRNK…TLPDDHSSYT (74 aa)) is disordered. Positions 141–157 (GDSSPDTFSDGLSSSTL) are enriched in polar residues. Residues K275 and K299 each participate in a glycyl lysine isopeptide (Lys-Gly) (interchain with G-Cter in SUMO) cross-link.

This sequence belongs to the IRF family. As to quaternary structure, monomer. Homodimer. Interacts with EP300. Interacts with MYD88. Interacts with PIAS3. Interacts with SPOP. In terms of processing, phosphorylated by CK2 and this positively regulates its activity. Post-translationally, sumoylation represses the transcriptional activity and displays enhanced resistance to protein degradation. Sumoylated by UBE2I/UBC9 and SUMO1. Inactivates the tumor suppressor activity. Elevated levels in tumor cells. Major site is Lys-275. Sumoylation is enhanced by PIAS3. Desumoylated by SENP1 in tumor cells and appears to compete with ubiquitination on C-terminal sites. Ubiquitinated in a SPOP-depedent manner. Appears to compete with sumoylation on C-terminal sites.

Its subcellular location is the nucleus. It is found in the cytoplasm. Activated by MYD88. Functionally, transcriptional regulator which displays a remarkable functional diversity in the regulation of cellular responses. Regulates transcription of IFN and IFN-inducible genes, host response to viral and bacterial infections, regulation of many genes expressed during hematopoiesis, inflammation, immune responses and cell proliferation and differentiation, regulation of the cell cycle and induction of growth arrest and programmed cell death following DNA damage. Stimulates both innate and acquired immune responses through the activation of specific target genes and can act as a transcriptional activator and repressor regulating target genes by binding to an interferon-stimulated response element (ISRE) in their promoters. Has an essentail role in IFNG-dependent immunity to mycobacteria. Competes with the transcriptional repressor ZBED2 for binding to a common consensus sequence in gene promoters. Its target genes for transcriptional activation activity include: genes involved in anti-viral response, such as IFN-alpha/beta, RIGI, TNFSF10/TRAIL, ZBP1, OAS1/2, PIAS1/GBP, EIF2AK2/PKR and RSAD2/viperin; antibacterial response, such as GBP2, GBP5 and NOS2/INOS; anti-proliferative response, such as p53/TP53, LOX and CDKN1A; apoptosis, such as BBC3/PUMA, CASP1, CASP7 and CASP8; immune response, such as IL7, IL12A/B and IL15, PTGS2/COX2 and CYBB; DNA damage responses and DNA repair, such as POLQ/POLH; MHC class I expression, such as TAP1, PSMB9/LMP2, PSME1/PA28A, PSME2/PA28B and B2M and MHC class II expression, such as CIITA; metabolic enzymes, such as ACOD1/IRG1. Represses genes involved in anti-proliferative response, such as BIRC5/survivin, CCNB1, CCNE1, CDK1, CDK2 and CDK4 and in immune response, such as FOXP3, IL4, ANXA2 and TLR4. Stimulates p53/TP53-dependent transcription through enhanced recruitment of EP300 leading to increased acetylation of p53/TP53. Plays an important role in immune response directly affecting NK maturation and activity, macrophage production of IL12, Th1 development and maturation of CD8+ T-cells. Also implicated in the differentiation and maturation of dendritic cells and in the suppression of regulatory T (Treg) cells development. Acts as a tumor suppressor and plays a role not only in antagonism of tumor cell growth but also in stimulating an immune response against tumor cells. This Homo sapiens (Human) protein is Interferon regulatory factor 1 (IRF1).